A 130-amino-acid polypeptide reads, in one-letter code: Granulin (130 aa).

Residues 1 to 26 (MNYSKIFIFGIISLILMALFSSTVES) form the signal peptide. 2 disulfides stabilise this stretch: C67/C79 and C73/C89.

This sequence belongs to the granulin family. Granulins are disulfide bridged.

The protein resides in the secreted. This Dictyostelium discoideum (Social amoeba) protein is Granulin (grn).